The chain runs to 261 residues: Ribonuclease HII (261 aa).

The 189-residue stretch at 71 to 259 (QYIAGVDEVG…VKEAKLHFES (189 aa)) folds into the RNase H type-2 domain. Asp77, Glu78, and Asp169 together coordinate a divalent metal cation.

The protein belongs to the RNase HII family. Mn(2+) is required as a cofactor. The cofactor is Mg(2+).

Its subcellular location is the cytoplasm. It catalyses the reaction Endonucleolytic cleavage to 5'-phosphomonoester.. Its function is as follows. Endonuclease that specifically degrades the RNA of RNA-DNA hybrids. This is Ribonuclease HII from Listeria innocua serovar 6a (strain ATCC BAA-680 / CLIP 11262).